The chain runs to 547 residues: ATP synthase subunit alpha (547 aa).

172-179 contacts ATP; that stretch reads GDRKTGKT.

It belongs to the ATPase alpha/beta chains family. F-type ATPases have 2 components, CF(1) - the catalytic core - and CF(0) - the membrane proton channel. CF(1) has five subunits: alpha(3), beta(3), gamma(1), delta(1), epsilon(1). CF(0) has three main subunits: a(1), b(2) and c(9-12). The alpha and beta chains form an alternating ring which encloses part of the gamma chain. CF(1) is attached to CF(0) by a central stalk formed by the gamma and epsilon chains, while a peripheral stalk is formed by the delta and b chains.

It is found in the cell membrane. The enzyme catalyses ATP + H2O + 4 H(+)(in) = ADP + phosphate + 5 H(+)(out). In terms of biological role, produces ATP from ADP in the presence of a proton gradient across the membrane. The alpha chain is a regulatory subunit. In Rhodococcus erythropolis (strain PR4 / NBRC 100887), this protein is ATP synthase subunit alpha.